Reading from the N-terminus, the 341-residue chain is MKRSEFYFDLPEELIAQEPLEDRASSRLMILDRRTGEIKHDIFKNITKYLKEGDCLVLNDTKVIPARLIGQREDSGGKVELLLLRRTSMNEWEVLVKPGKRAKVGKRVVFGNGELVAEIIDTTEAGGRIARFYYDGVFEEVLDRLGEMPVPPYIKKKLKDKNRYQTVYAKYEGSAAAPTAGLHFTEELLDEIRNMGVKTVFITLHVGLGTFRPVKEEIIENHKMHEEFYIVTEEAAKAINEARKNGGRIIAVGTTSTRTLETVADESGYIHPKSGWTDIFIYPGYKFKAIDGMITNFHLPESTLIMMVSAFAGKENIMRAYKVAIENKYRFFSFGDAMLII.

Belongs to the QueA family. Monomer.

The protein resides in the cytoplasm. The catalysed reaction is 7-aminomethyl-7-carbaguanosine(34) in tRNA + S-adenosyl-L-methionine = epoxyqueuosine(34) in tRNA + adenine + L-methionine + 2 H(+). It functions in the pathway tRNA modification; tRNA-queuosine biosynthesis. Transfers and isomerizes the ribose moiety from AdoMet to the 7-aminomethyl group of 7-deazaguanine (preQ1-tRNA) to give epoxyqueuosine (oQ-tRNA). The chain is S-adenosylmethionine:tRNA ribosyltransferase-isomerase from Caldanaerobacter subterraneus subsp. tengcongensis (strain DSM 15242 / JCM 11007 / NBRC 100824 / MB4) (Thermoanaerobacter tengcongensis).